The following is a 132-amino-acid chain: Small ribosomal subunit protein uS8 (132 aa).

It belongs to the universal ribosomal protein uS8 family. As to quaternary structure, part of the 30S ribosomal subunit. Contacts proteins S5 and S12.

In terms of biological role, one of the primary rRNA binding proteins, it binds directly to 16S rRNA central domain where it helps coordinate assembly of the platform of the 30S subunit. This Cereibacter sphaeroides (strain ATCC 17025 / ATH 2.4.3) (Rhodobacter sphaeroides) protein is Small ribosomal subunit protein uS8.